The chain runs to 143 residues: Protein STIG1 (143 aa).

Residues 1–23 (MDFIILLIAILALSSTPITIISG) form the signal peptide. The segment at 76–87 (RTCCFNYFCVDL) is sufficient for PI(4)P binding. A sufficient for binding to the extracellular domain of PRK2 region spans residues 80–83 (FNYF). The tract at residues 88 to 115 (FTNRFNCGSCGLVCIVGTRCCGGICVDI) is sufficient for PI(3)P binding.

This sequence belongs to the STIG1 family. In terms of assembly, interacts with PRK1 and PRK2 (via extracellular domain). Expressed in the stigma and the upper section of the style.

Its subcellular location is the secreted. It localises to the extracellular space. The protein resides in the apoplast. Its function is as follows. Promotes pollen tube growth. A C-terminal peptide is cleaved from the propeptide in the stigmatic exudate and represent the major form of STIG1. Binds phosphoinositol lipids. The binding of external phosphatidylinositol 3-phosphate (PI(3)P) and PRK2 by STIG1 induces a rapid intracellular reactive oxygen species elevation. The chain is Protein STIG1 from Solanum lycopersicum (Tomato).